A 113-amino-acid chain; its full sequence is U11-theraphotoxin-Hhn1r (113 aa).

The first 21 residues, 1–21 (MNTVRVTFLLVFVLAVSLGQA), serve as a signal peptide directing secretion. The propeptide occupies 22–74 (DKDENRMEMQEKTEQGKSYLDFAENLLLQKLEELEAKLLEEDSEESRNSRQKR). The interval 61–83 (EEDSEESRNSRQKRCIGEGVPCD) is disordered. 3 disulfides stabilise this stretch: Cys-75–Cys-90, Cys-82–Cys-95, and Cys-89–Cys-110.

The protein belongs to the neurotoxin 14 (magi-1) family. 01 (HNTX-16) subfamily. In terms of tissue distribution, expressed by the venom gland.

It localises to the secreted. Functionally, probable ion channel inhibitor. This is U11-theraphotoxin-Hhn1r from Cyriopagopus hainanus (Chinese bird spider).